We begin with the raw amino-acid sequence, 264 residues long: Adenosylcobinamide-GDP ribazoletransferase (264 aa).

6 consecutive transmembrane segments (helical) span residues 39 to 59, 63 to 83, 121 to 141, 148 to 168, 201 to 221, and 241 to 261; these read IAYA…AILI, ALGL…VLLT, ACAL…LLAL, LALI…LEFL, LLIV…LSVL, and VAGA…LIYA.

It belongs to the CobS family. The cofactor is Mg(2+).

The protein resides in the cell inner membrane. The catalysed reaction is alpha-ribazole + adenosylcob(III)inamide-GDP = adenosylcob(III)alamin + GMP + H(+). The enzyme catalyses alpha-ribazole 5'-phosphate + adenosylcob(III)inamide-GDP = adenosylcob(III)alamin 5'-phosphate + GMP + H(+). It participates in cofactor biosynthesis; adenosylcobalamin biosynthesis; adenosylcobalamin from cob(II)yrinate a,c-diamide: step 7/7. Joins adenosylcobinamide-GDP and alpha-ribazole to generate adenosylcobalamin (Ado-cobalamin). Also synthesizes adenosylcobalamin 5'-phosphate from adenosylcobinamide-GDP and alpha-ribazole 5'-phosphate. In Azorhizobium caulinodans (strain ATCC 43989 / DSM 5975 / JCM 20966 / LMG 6465 / NBRC 14845 / NCIMB 13405 / ORS 571), this protein is Adenosylcobinamide-GDP ribazoletransferase.